A 1657-amino-acid chain; its full sequence is Endoribonuclease Dicer homolog 4 (1657 aa).

Low complexity predominate over residues 1–14 (MGDAAAAAPAAAAA). Residues 1 to 26 (MGDAAAAAPAAAAAGPSSTRGEPKDP) form a disordered region. The Helicase ATP-binding domain maps to 37–214 (LCKRAVEENI…SHSFTEKGGR (178 aa)). 50 to 57 (LGTGCGKT) is a binding site for ATP. A DECH box motif is present at residues 157–160 (DECH). Residues 400–567 (NKFSVLINVL…TSNDMFDCLE (168 aa)) form the Helicase C-terminal domain. Residues 585–675 (SVSLLHCYCD…LPGPGSRKNK (91 aa)) form the Dicer dsRNA-binding fold domain. In terms of domain architecture, PAZ spans 856 to 978 (DVSVHASYSS…LPPELCSLKV (123 aa)). 2 consecutive RNase III domains span residues 1010 to 1173 (DVML…VEGG) and 1214 to 1358 (IAGL…LDSG). Glutamate 1252, aspartate 1344, and glutamate 1347 together coordinate Mg(2+). The 68-residue stretch at 1384 to 1451 (NPMRELRELC…AQETLSKLKN (68 aa)) folds into the DRBM 1 domain. A disordered region spans residues 1525–1556 (GSGKHDVNNGRNNQPKLATQSGRLPSEATEKS). Positions 1533–1547 (NGRNNQPKLATQSGR) are enriched in polar residues. A DRBM 2 domain is found at 1569–1645 (TARSFLFELC…AQGALWCLKQ (77 aa)).

The protein belongs to the helicase family. Dicer subfamily. May interact with ARGONAUTE1 or PINHEAD through their common PAZ domains. It depends on Mg(2+) as a cofactor. Mn(2+) serves as cofactor. Expressed in roots, leaf blades, leaf sheaths, shoot apices and spikelets.

The protein localises to the nucleus. Involved in the RNA silencing pathway. Cleaves double-stranded RNA to produce small interfering RNAs (siRNAs) which target the selective destruction of complementary RNAs. Required for the production of 21 nucleotide siRNAs. Regulates shoot apical meristem (SAM) initiation and maintenance, leaf polarization and lemma polarity through the trans-acting siRNAS (ta-siRNAs) pathway, which probably modulate the expression of the ARF2, ARF3, ARF4, ARF14 and ARF15 genes. Can process endogenous 21 nucleotide siRNAs derived from an imperfect inverted repeat. May not be involved in microRNAs (miRNAs) production. The sequence is that of Endoribonuclease Dicer homolog 4 (DCL4) from Oryza sativa subsp. japonica (Rice).